The sequence spans 312 residues: Putative electron transfer flavoprotein subunit YdiR (312 aa).

254 to 282 contributes to the FAD binding site; it reads LYLTLGISGQIQHMVGGNGAKVIVAINKD.

This sequence belongs to the ETF alpha-subunit/FixB family. In terms of assembly, ydiR and YdiQ form a heterodimer.

May play a role in a redox process. In Escherichia coli (strain K12), this protein is Putative electron transfer flavoprotein subunit YdiR (ydiR).